The sequence spans 247 residues: Trypsin (247 aa).

An N-terminal signal peptide occupies residues 1–21; sequence LTTVISYFALVAFALVGVSYA. A propeptide spans 22–30 (activation peptide); sequence TPKASINGR. In terms of domain architecture, Peptidase S1 spans 31 to 247; it reads IVGGEMTDIS…QSNFPGVYGI (217 aa). A disulfide bridge links C61 with C77. Catalysis depends on charge relay system residues H76 and D120. Disulfide bonds link C185–C201 and C212–C236. Residue S216 is the Charge relay system of the active site.

It belongs to the peptidase S1 family. In terms of tissue distribution, midgut.

Its subcellular location is the secreted. It localises to the extracellular space. The catalysed reaction is Preferential cleavage: Arg-|-Xaa, Lys-|-Xaa.. The chain is Trypsin from Simulium vittatum (Striped black fly).